A 229-amino-acid polypeptide reads, in one-letter code: Uracil-DNA glycosylase (229 aa).

The active-site Proton acceptor is the D67.

The protein belongs to the uracil-DNA glycosylase (UDG) superfamily. UNG family.

It localises to the cytoplasm. It carries out the reaction Hydrolyzes single-stranded DNA or mismatched double-stranded DNA and polynucleotides, releasing free uracil.. Its function is as follows. Excises uracil residues from the DNA which can arise as a result of misincorporation of dUMP residues by DNA polymerase or due to deamination of cytosine. In Coxiella burnetii (strain CbuG_Q212) (Coxiella burnetii (strain Q212)), this protein is Uracil-DNA glycosylase.